Consider the following 302-residue polypeptide: 4-hydroxy-tetrahydrodipicolinate synthase (302 aa).

Pyruvate is bound at residue threonine 55. Catalysis depends on tyrosine 144, which acts as the Proton donor/acceptor. The active-site Schiff-base intermediate with substrate is the lysine 172. Valine 214 is a binding site for pyruvate.

It belongs to the DapA family. As to quaternary structure, homotetramer; dimer of dimers.

The protein localises to the cytoplasm. The enzyme catalyses L-aspartate 4-semialdehyde + pyruvate = (2S,4S)-4-hydroxy-2,3,4,5-tetrahydrodipicolinate + H2O + H(+). It participates in amino-acid biosynthesis; L-lysine biosynthesis via DAP pathway; (S)-tetrahydrodipicolinate from L-aspartate: step 3/4. Functionally, catalyzes the condensation of (S)-aspartate-beta-semialdehyde [(S)-ASA] and pyruvate to 4-hydroxy-tetrahydrodipicolinate (HTPA). The polypeptide is 4-hydroxy-tetrahydrodipicolinate synthase (Parasynechococcus marenigrum (strain WH8102)).